The chain runs to 1009 residues: MICAL-like protein 2 (1009 aa).

The Calponin-homology (CH) domain occupies 1–107 (MAAIKALQEW…YVSQYYNYFH (107 aa)). Positions 1–260 (MAAIKALQEW…KSSNLASRKP (260 aa)) are forms an intramolecular interaction with the C-terminal coiled coil domain keeping the protein in a closed conformation. A phosphoserine mark is found at Ser110, Ser143, and Ser153. Disordered stretches follow at residues 114-180 (GMAG…PGTA), 247-268 (SVSPKSSNLASRKPGGVTADTR), 348-447 (NSSP…TSKV), and 655-834 (SPSI…TSPV). Residues 144–171 (PAQTQRSPLSPARTNPVVQRNEGGSQRP) are compositionally biased toward polar residues. Positions 186-248 (SICGVCGKHV…THHSSEVTSV (63 aa)) constitute an LIM zinc-binding domain. Phosphoserine is present on Ser249. Residues 261–393 (GGVTADTRPF…QGQTASKGVK (133 aa)) form a necessary and sufficient for interaction with actinins region. Positions 261–805 (GGVTADTRPF…EDGTRSCKEE (545 aa)) are mediates targeting to the cell plasma membrane. Over residues 348–419 (NSSPIGWSSP…AWTSSASKTQ (72 aa)) the composition is skewed to polar residues. Residues 430–442 (PSAPAPASAPAPA) are compositionally biased toward pro residues. A compositionally biased stretch (basic and acidic residues) spans 694–730 (EGWRARLKPVDKKTPAGRSLEQKEPVLAEPRIGDTSR). Composition is skewed to low complexity over residues 731-746 (KASSSSDSSVHITLTS) and 755-769 (PAGSGPSPAALSPSP). Ser766 and Ser768 each carry phosphoserine. Over residues 791 to 817 (EPKKQEDGTRSCKEEKSPTRWSRERSA) the composition is skewed to basic and acidic residues. The forms an intramolecular interaction with the N-terminal Calponin-homology and LIM zinc-binding domains-containing region keeping the protein in a closed conformation stretch occupies residues 806–913 (KSPTRWSRER…LMYKSKDQRL (108 aa)). Ser832 is subject to Phosphoserine. The region spanning 833–980 (PVRLHPDYIP…EQEEDQMLEN (148 aa)) is the bMERB domain. Residues 841 to 880 (IPQEELQRQLQDIESQLDALELRGVELEKRLRAAEGDASE) adopt a coiled-coil conformation. The mediates interaction with RAB13 and is required for transition from the closed to the open conformation stretch occupies residues 913–1009 (LEEQQLDLQG…WSSKSKSGQA (97 aa)).

Interacts with RAB13 (GTP-bound form); competes with RAB8A and is involved in tight junctions assembly. Interacts with RAB8A; competes with RAB13 and is involved in E-cadherin endocytic recycling. Interacts with RAB8B. Interacts (preferentially in opened conformation) with ACTN1 and ACTN4; stimulated by RAB13 activation. Interacts (via calponin-homology (CH) domain) with the filamins FLNA, FLNB and FLNC (via actin-binding domain). Detected in brain, lung, liver and kidney (at protein level).

The protein localises to the cell membrane. It is found in the cell junction. It localises to the tight junction. The protein resides in the recycling endosome. Its subcellular location is the cell projection. The protein localises to the neuron projection. It is found in the cytoplasm. It localises to the cytoskeleton. In terms of biological role, effector of small Rab GTPases RAB8A and RAB13 which is involved in junctional complexes assembly through the regulation of cell adhesion molecules transport to the plasma membrane and actin cytoskeleton reorganization. Regulates the endocytic recycling of occludins, claudins and E-cadherin to the plasma membrane and may thereby regulate the establishment of tight junctions and adherens junctions. In parallel, may regulate actin cytoskeleton reorganization directly through interaction with F-actin or indirectly through actinins and filamins. Undergoes liquid-liquid phase separation to form tubular recycling endosomes. Plays 2 sequential roles in the biogenesis of tubular recycling endosomes: first organizes phase separation and then the closed form formed by interaction with RAB8A promotes endosomal tubulation. This is MICAL-like protein 2 (Micall2) from Mus musculus (Mouse).